Here is a 391-residue protein sequence, read N- to C-terminus: F-box protein At2g34280 (391 aa).

Positions 1 to 43 (MDLLPYDVVEHILERLDVKSLLNCKSVSKQWRSTIRCRAFQER) constitute an F-box domain.

The polypeptide is F-box protein At2g34280 (Arabidopsis thaliana (Mouse-ear cress)).